Consider the following 86-residue polypeptide: U15-lycotoxin-Ls1d (86 aa).

Residues 1 to 20 (MNSKIFAVLLLLALLSCVLS) form the signal peptide. The region spanning 21–66 (DQYCPKSSITACKKMNIRNDCCKDDDCTGGSWCCATPCGNFCKYPT) is the WAP domain. 5 disulfide bridges follow: cysteine 24-cysteine 54, cysteine 32-cysteine 58, cysteine 41-cysteine 53, cysteine 42-cysteine 80, and cysteine 47-cysteine 62.

The protein belongs to the venom protein 11 family. 01 (wap-1) subfamily. In terms of processing, contains 5 disulfide bonds. Expressed by the venom gland.

The protein localises to the secreted. Functionally, has antibacterial activity. The polypeptide is U15-lycotoxin-Ls1d (Lycosa singoriensis (Wolf spider)).